The sequence spans 600 residues: MRLSQMLFVTLREDPAEAEIPSHKLLLRAGYIRRIASGIYAYLPLMWRVLRKVSQIVREEMDATGAQETLLPQLQPAELWQESGRWETYAKAEGIMFSLDDRQQRQLGLGPTHEEVITAVARDLIRSYRQLPQNLYQIQTKFRDEIRPRFGLMRGREFIMKDAYSFHADEESLRQTYAAMDQAYRNIFRRCGLQFRAVEADSGAIGGSASQEFMILADAGEDEILYTEDGRYAANVEKAVSLPAEAIASAFTTFEKRETPGTDTIASLCEFLKADPTQVVKQVLYQAVFDNGKLLPILISIRGDQSVNEIKLTNELTRRAADYGAKTVIALTVPDAEALKKWTAAPLPLGYLGPDLADSAIAVNESIIPKFLRLVDPTAAELQNFVTGANEVNFHVVGANWETNFPKPAVVDLRTALVGDRAQHDSSQVLASARGIEAGHIFQLGLKYSQAMGATFTTENGTEEPLWMGCYGIGVSRVAQAAVEQSYDKDGIIWPVAIAPYQAVVVIPNITDTEQVAAAEKIYADLTAAGIETLLDDRDERAGVKFKDADLIGIPYRIVTGRSLKEGKVEVVQRASKESSVIAVGSVVETVQDWIAAAIV.

This sequence belongs to the class-II aminoacyl-tRNA synthetase family. ProS type 1 subfamily. Homodimer.

The protein resides in the cytoplasm. The catalysed reaction is tRNA(Pro) + L-proline + ATP = L-prolyl-tRNA(Pro) + AMP + diphosphate. Functionally, catalyzes the attachment of proline to tRNA(Pro) in a two-step reaction: proline is first activated by ATP to form Pro-AMP and then transferred to the acceptor end of tRNA(Pro). As ProRS can inadvertently accommodate and process non-cognate amino acids such as alanine and cysteine, to avoid such errors it has two additional distinct editing activities against alanine. One activity is designated as 'pretransfer' editing and involves the tRNA(Pro)-independent hydrolysis of activated Ala-AMP. The other activity is designated 'posttransfer' editing and involves deacylation of mischarged Ala-tRNA(Pro). The misacylated Cys-tRNA(Pro) is not edited by ProRS. This chain is Proline--tRNA ligase, found in Synechococcus sp. (strain ATCC 27144 / PCC 6301 / SAUG 1402/1) (Anacystis nidulans).